The following is a 130-amino-acid chain: Small ribosomal subunit protein uS8 (130 aa).

This sequence belongs to the universal ribosomal protein uS8 family. Part of the 30S ribosomal subunit. Contacts proteins S5 and S12.

One of the primary rRNA binding proteins, it binds directly to 16S rRNA central domain where it helps coordinate assembly of the platform of the 30S subunit. The chain is Small ribosomal subunit protein uS8 from Pseudomonas putida (strain ATCC 700007 / DSM 6899 / JCM 31910 / BCRC 17059 / LMG 24140 / F1).